The primary structure comprises 382 residues: Pyrimidine monooxygenase RutA (382 aa).

Residues 68-69, asparagine 134, glutamate 143, 159-160, and serine 209 each bind FMN; these read IK and RY.

It belongs to the NtaA/SnaA/DszA monooxygenase family. RutA subfamily.

It carries out the reaction uracil + FMNH2 + NADH + O2 = (Z)-3-ureidoacrylate + FMN + NAD(+) + H2O + H(+). The enzyme catalyses thymine + FMNH2 + NADH + O2 = (Z)-2-methylureidoacrylate + FMN + NAD(+) + H2O + H(+). Its function is as follows. Catalyzes the pyrimidine ring opening between N-3 and C-4 by an unusual flavin hydroperoxide-catalyzed mechanism, adding oxygen atoms in the process to yield ureidoacrylate peracid, that immediately reacts with FMN forming ureidoacrylate and FMN-N(5)-oxide. The FMN-N(5)-oxide reacts spontaneously with NADH to produce FMN. Requires the flavin reductase RutF to regenerate FMN in vivo. This Escherichia coli (strain K12 / MC4100 / BW2952) protein is Pyrimidine monooxygenase RutA.